A 620-amino-acid polypeptide reads, in one-letter code: Probable serine/threonine-protein kinase RTK1 (620 aa).

Disordered stretches follow at residues Met1–Arg20, Ala29–Thr130, Lys153–Ser186, Gln210–Ser237, and His252–Lys271. Positions Leu7–Leu18 are enriched in low complexity. The span at Lys56–Ser76 shows a compositional bias: basic and acidic residues. A Phosphothreonine modification is found at Thr58. At Ser60 the chain carries Phosphoserine. Polar residues-rich tracts occupy residues Val95–Ser107, Thr165–Ser186, and Gln210–Asn222. Position 216 is a phosphoserine (Ser216). The segment covering Asn254–Arg263 has biased composition (basic residues). The Protein kinase domain maps to Gly302 to Leu575. ATP contacts are provided by residues Leu308–Val316 and Lys330. Residue Lys334 forms a Glycyl lysine isopeptide (Lys-Gly) (interchain with G-Cter in ubiquitin) linkage. Asp430 acts as the Proton acceptor in catalysis.

It belongs to the protein kinase superfamily. Ser/Thr protein kinase family. As to quaternary structure, interacts with ribosome biogenesis factors ARC1, CKA2 and GUS1.

It catalyses the reaction L-seryl-[protein] + ATP = O-phospho-L-seryl-[protein] + ADP + H(+). It carries out the reaction L-threonyl-[protein] + ATP = O-phospho-L-threonyl-[protein] + ADP + H(+). Its function is as follows. Probable serine/threonine-protein kinase that may be involved in ribosome biogenesis. This chain is Probable serine/threonine-protein kinase RTK1 (RTK1), found in Saccharomyces cerevisiae (strain ATCC 204508 / S288c) (Baker's yeast).